The chain runs to 125 residues: MAVSKEDILETISNMTVLEIVDLISAMEEKFGVSAAAAVAAAPVAAAGGEAAAEVKDEFDVVMTSFGANKVGVIKVIRAITGLGLKEAKDMVEGAPSTVKEGANKDEAEKIKKELEEAGASVELK.

Belongs to the bacterial ribosomal protein bL12 family. Homodimer. Part of the ribosomal stalk of the 50S ribosomal subunit. Forms a multimeric L10(L12)X complex, where L10 forms an elongated spine to which 2 to 4 L12 dimers bind in a sequential fashion. Binds GTP-bound translation factors.

Functionally, forms part of the ribosomal stalk which helps the ribosome interact with GTP-bound translation factors. Is thus essential for accurate translation. This chain is Large ribosomal subunit protein bL12, found in Thioalkalivibrio sulfidiphilus (strain HL-EbGR7).